The chain runs to 404 residues: Voltage-gated potassium channel subunit beta-3 (404 aa).

The span at 1 to 14 shows a compositional bias: polar residues; sequence MQVSIACTEQNLRS. The segment at 1 to 78 is disordered; it reads MQVSIACTEQ…RESTGRGTGM (78 aa). Residues 28 to 50 are compositionally biased toward gly residues; sequence PGGGNGGPVGGGHGNPPGGGGLG. Positions 97, 98, 104, and 126 each coordinate NADP(+). Tyrosine 131 acts as the Proton donor/acceptor in catalysis. NADP(+)-binding residues include asparagine 199, serine 229, arginine 230, glutamine 255, tryptophan 284, serine 285, proline 286, leucine 287, alanine 288, cysteine 289, lysine 295, lysine 305, glycine 364, serine 366, glutamine 370, and glutamate 373.

It belongs to the shaker potassium channel beta subunit family. In terms of assembly, forms heteromultimeric complex with alpha subunits. Interacts with KCNA5 and KCNB2. Predominantly expressed in brain. Strongest expression in olfactory bulb and thalamic nuclei. Not detected in heart, spleen, lung, liver, skeletal muscle, kidney and testis.

Its subcellular location is the cytoplasm. Its function is as follows. Regulatory subunit of the voltage-gated potassium (Kv) channels composed of pore-forming and potassium-conducting alpha subunits and of regulatory beta subunits. The beta-3/KCNAB3 subunit may mediate closure of potassium channels. Inactivates Kv1.4/KCNA4 alpha subunit-containing Kv channel current but not Kv1.1/KCNA1 or Kv1.5/KCNA5 channels. May display nicotinamide adenine dinucleotide phosphate (NADPH)-dependent aldoketoreductase activity. The binding of oxidized and reduced NADP(H) cofactors may be required for the regulation of potassium channel activity. The polypeptide is Voltage-gated potassium channel subunit beta-3 (Rattus norvegicus (Rat)).